The following is a 148-amino-acid chain: Lysozyme C (148 aa).

The first 18 residues, 1 to 18 (MKVLVILGLVLLSVMVQG), serve as a signal peptide directing secretion. The C-type lysozyme domain occupies 19 to 148 (KVFERCELAR…VSQYVQGCGV (130 aa)). 4 disulfide bridges follow: Cys-24–Cys-146, Cys-48–Cys-134, Cys-83–Cys-99, and Cys-95–Cys-113. Residues Glu-53 and Asp-71 contribute to the active site.

Belongs to the glycosyl hydrolase 22 family. In terms of assembly, monomer.

The protein localises to the secreted. The catalysed reaction is Hydrolysis of (1-&gt;4)-beta-linkages between N-acetylmuramic acid and N-acetyl-D-glucosamine residues in a peptidoglycan and between N-acetyl-D-glucosamine residues in chitodextrins.. In terms of biological role, lysozymes have primarily a bacteriolytic function; those in tissues and body fluids are associated with the monocyte-macrophage system and enhance the activity of immunoagents. The chain is Lysozyme C (LYZ) from Saimiri sciureus (Common squirrel monkey).